The sequence spans 910 residues: Adhesion G-protein coupled receptor F1 (910 aa).

A signal peptide spans 1–19 (MKVGVLWLISFFTFTDGHG). Residues 20-583 (GFLGKNDGIK…SPFVPSTIFP (564 aa)) lie on the Extracellular side of the membrane. Asparagine 139, asparagine 168, asparagine 205, asparagine 282, asparagine 310, asparagine 317, asparagine 329, asparagine 354, asparagine 368, asparagine 389, asparagine 410, asparagine 423, asparagine 437, asparagine 455, asparagine 512, asparagine 528, and asparagine 553 each carry an N-linked (GlcNAc...) asparagine glycan. Positions 148–256 (ERTKIWGTFK…GSFRVFGKAQ (109 aa)) constitute an SEA domain. 2 disulfide bridges follow: cysteine 257/cysteine 287 and cysteine 275/cysteine 299. A GAIN-B domain is found at 437–579 (NKSQLKRGYS…SILMSPFVPS (143 aa)). Disulfide bonds link cysteine 534/cysteine 561 and cysteine 549/cysteine 563. Residues 534-579 (CVFWDFSHLQWNDAGCHLVNETQDIVTCQCTHLTSFSILMSPFVPS) form a GPS region. Residues 568-576 (SFSILMSPF) form a stachel region. A helical transmembrane segment spans residues 584-609 (VVKWITYVGLGISIGSLILCLIIEAL). At 610 to 621 (FWKQIKKSQTSH) the chain is on the cytoplasmic side. The helical transmembrane segment at 622–646 (TRRICMVNIALSLLIADVWFIVGAT) threads the bilayer. The Extracellular segment spans residues 647–658 (VDTTVNPSGVCT). Residues cysteine 657 and cysteine 733 are joined by a disulfide bond. The helical transmembrane segment at 659–684 (AAVFFTHFFYLSLFFWMLMLGILLAY) threads the bilayer. The Cytoplasmic portion of the chain corresponds to 685-696 (RIILVFHHMAQH). Residues 697 to 719 (LMMAVGFCLGYGCPLIISVITIA) form a helical membrane-spanning segment. Residues 720 to 742 (VTQPSNTYKRKDVCWLNWSNGSK) are Extracellular-facing. N-linked (GlcNAc...) asparagine glycosylation is found at asparagine 736 and asparagine 739. The chain crosses the membrane as a helical span at residues 743 to 767 (PLLAFVVPALAIVAVNFVVVLLVLT). Residues 768 to 784 (KLWRPTVGERLSRDDKA) are Cytoplasmic-facing. Residues 785–813 (TIIRVGKSLLILTPLLGLTWGFGIGTIVD) form a helical membrane-spanning segment. At 814–816 (SQN) the chain is on the extracellular side. Residues 817 to 842 (LAWHVIFALLNAFQGFFILCFGILLD) traverse the membrane as a helical segment. Topologically, residues 843–910 (SKLRQLLFNK…IMLTQFVSNE (68 aa)) are cytoplasmic.

The protein belongs to the G-protein coupled receptor 2 family. Adhesion G-protein coupled receptor (ADGR) subfamily. As to quaternary structure, heterodimer of 2 chains generated by proteolytic processing; the large extracellular N-terminal fragment and the membrane-bound C-terminal fragment predominantly remain associated and non-covalently linked. Post-translationally, autoproteolytically processed at the GPS region of the GAIN-B domain; this cleavage modulates receptor activity. Glycosylated. Glycosylation at Asn-389 is required for secretion or folding. In terms of tissue distribution, mainly expressed in the kidney. Up-regulated in lung adenocarcinomas and prostate cancers.

The protein resides in the cell membrane. The protein localises to the secreted. Its activity is regulated as follows. Forms a heterodimer of 2 chains generated by proteolytic processing that remain associated through non-covalent interactions mediated by the GAIN-B domain. In the inactivated receptor, the Stachel sequence (also named stalk) is embedded in the GAIN-B domain, where it adopts a beta-strand conformation. On activation, the Stachel moves into the 7 transmembrane region and adopts a twisted hook-shaped configuration that forms contacts within the receptor, leading to coupling of a G-alpha protein, which activates signaling. The cleaved GAIN-B and N-terminal domains can then dissociate from the rest of the receptor. Its function is as follows. Adhesion G-protein coupled receptor (aGPCR) for N-docosahexaenoylethanolamine (synaptamide), an omega-3 fatty acid lipid highly enriched in the brain. Ligand binding causes a conformation change that triggers signaling via guanine nucleotide-binding proteins (G proteins) and modulates the activity of downstream effectors, such as adenylate cyclase. ADGRF1 is coupled to G(s) G proteins and mediates activation of adenylate cyclase activity. Also able to couple to G(q), G(i) and G(12)/G(13) G proteins; additional evidence is however required to confirm this result in vivo. Involved in the development of neurons and cognitive function. In liver, involved in fat accumulation. The polypeptide is Adhesion G-protein coupled receptor F1 (Homo sapiens (Human)).